A 398-amino-acid chain; its full sequence is Bifunctional enzyme IspD/IspF (398 aa).

The 2-C-methyl-D-erythritol 4-phosphate cytidylyltransferase stretch occupies residues 1-234 (MAKSQRTAVV…ARLAAQLGDI (234 aa)). The tract at residues 235–398 (RTGTGYDVHA…LPFNEKTWSV (164 aa)) is 2-C-methyl-D-erythritol 2,4-cyclodiphosphate synthase. A divalent metal cation is bound by residues Asp-241 and His-243. 4-CDP-2-C-methyl-D-erythritol 2-phosphate is bound by residues 241–243 (DVH) and 267–268 (HS). His-275 is an a divalent metal cation binding site. Residues 289–291 (DIG), 365–368 (TTSE), Phe-372, and Arg-375 contribute to the 4-CDP-2-C-methyl-D-erythritol 2-phosphate site.

This sequence in the N-terminal section; belongs to the IspD/TarI cytidylyltransferase family. IspD subfamily. It in the C-terminal section; belongs to the IspF family. A divalent metal cation is required as a cofactor.

The catalysed reaction is 2-C-methyl-D-erythritol 4-phosphate + CTP + H(+) = 4-CDP-2-C-methyl-D-erythritol + diphosphate. It catalyses the reaction 4-CDP-2-C-methyl-D-erythritol 2-phosphate = 2-C-methyl-D-erythritol 2,4-cyclic diphosphate + CMP. It participates in isoprenoid biosynthesis; isopentenyl diphosphate biosynthesis via DXP pathway; isopentenyl diphosphate from 1-deoxy-D-xylulose 5-phosphate: step 2/6. The protein operates within isoprenoid biosynthesis; isopentenyl diphosphate biosynthesis via DXP pathway; isopentenyl diphosphate from 1-deoxy-D-xylulose 5-phosphate: step 4/6. In terms of biological role, bifunctional enzyme that catalyzes the formation of 4-diphosphocytidyl-2-C-methyl-D-erythritol from CTP and 2-C-methyl-D-erythritol 4-phosphate (MEP) (IspD), and catalyzes the conversion of 4-diphosphocytidyl-2-C-methyl-D-erythritol 2-phosphate (CDP-ME2P) to 2-C-methyl-D-erythritol 2,4-cyclodiphosphate (ME-CPP) with a corresponding release of cytidine 5-monophosphate (CMP) (IspF). This Bradyrhizobium diazoefficiens (strain JCM 10833 / BCRC 13528 / IAM 13628 / NBRC 14792 / USDA 110) protein is Bifunctional enzyme IspD/IspF.